A 437-amino-acid polypeptide reads, in one-letter code: tRNA-2-methylthio-N(6)-dimethylallyladenosine synthase (437 aa).

Residues 1 to 115 (MKVYIETMGC…ISQVIHKEKA (115 aa)) form the MTTase N-terminal domain. [4Fe-4S] cluster is bound by residues Cys-10, Cys-46, Cys-78, Cys-148, Cys-152, and Cys-155. In terms of domain architecture, Radical SAM core spans 134–367 (KKAQIRSLLN…QNRHKEILEE (234 aa)). The TRAM domain occupies 370 to 436 (KLEVGKTHVV…KGRLMAATKG (67 aa)).

This sequence belongs to the methylthiotransferase family. MiaB subfamily. As to quaternary structure, monomer. The cofactor is [4Fe-4S] cluster.

It is found in the cytoplasm. The catalysed reaction is N(6)-dimethylallyladenosine(37) in tRNA + (sulfur carrier)-SH + AH2 + 2 S-adenosyl-L-methionine = 2-methylsulfanyl-N(6)-dimethylallyladenosine(37) in tRNA + (sulfur carrier)-H + 5'-deoxyadenosine + L-methionine + A + S-adenosyl-L-homocysteine + 2 H(+). Functionally, catalyzes the methylthiolation of N6-(dimethylallyl)adenosine (i(6)A), leading to the formation of 2-methylthio-N6-(dimethylallyl)adenosine (ms(2)i(6)A) at position 37 in tRNAs that read codons beginning with uridine. In Helicobacter pylori (strain ATCC 700392 / 26695) (Campylobacter pylori), this protein is tRNA-2-methylthio-N(6)-dimethylallyladenosine synthase.